We begin with the raw amino-acid sequence, 308 residues long: MSAAPLVRDVDRLDPAGVAAVLALLRAATAADGVRPLSEEAELRLQHGGPAGGRDVLATAADGALTGYARFEGGEGTGDAEAELVVAPGSRRRGVGRALLTRLEELAGDRPLRVWAHGDLPGSAELAQRHGYERARVLLQMRRELAGVDPEPRLRLPEGVQVRTFRSGTDEQAWLRTNARAFASHPEQGSWTAEDLRLREAEPWFDPAGFFLAWDGDRLLGSHWTKVHPPGDEGPEAVGEVYVLGIDPDAQGLGLGRALTDVGLAHLRRLGLRQVLLYVEEDNTAAVTLYERSGFTRHAVDVSWRRAR.

N-acetyltransferase domains are found at residues 8–155 and 160–308; these read RDVD…PRLR and VQVR…RRAR. Glu-39 is a 1D-myo-inositol 2-(L-cysteinylamino)-2-deoxy-alpha-D-glucopyranoside binding site. 84–86 contacts acetyl-CoA; sequence LVV. The 1D-myo-inositol 2-(L-cysteinylamino)-2-deoxy-alpha-D-glucopyranoside site is built by Glu-187, Lys-226, and Glu-240. Acetyl-CoA is bound by residues 244 to 246 and 251 to 257; these read LGI and QGLGLGR. Tyr-278 provides a ligand contact to 1D-myo-inositol 2-(L-cysteinylamino)-2-deoxy-alpha-D-glucopyranoside.

Belongs to the acetyltransferase family. MshD subfamily. In terms of assembly, monomer.

It catalyses the reaction 1D-myo-inositol 2-(L-cysteinylamino)-2-deoxy-alpha-D-glucopyranoside + acetyl-CoA = mycothiol + CoA + H(+). Catalyzes the transfer of acetyl from acetyl-CoA to desacetylmycothiol (Cys-GlcN-Ins) to form mycothiol. The chain is Mycothiol acetyltransferase from Geodermatophilus obscurus (strain ATCC 25078 / DSM 43160 / JCM 3152 / CCUG 61914 / KCC A-0152 / KCTC 9177 / NBRC 13315 / NRRL B-3577 / G-20).